Reading from the N-terminus, the 226-residue chain is N-(5'-phosphoribosyl)anthranilate isomerase (226 aa).

This sequence belongs to the TrpF family.

The enzyme catalyses N-(5-phospho-beta-D-ribosyl)anthranilate = 1-(2-carboxyphenylamino)-1-deoxy-D-ribulose 5-phosphate. It functions in the pathway amino-acid biosynthesis; L-tryptophan biosynthesis; L-tryptophan from chorismate: step 3/5. The polypeptide is N-(5'-phosphoribosyl)anthranilate isomerase (Synechococcus sp. (strain JA-3-3Ab) (Cyanobacteria bacterium Yellowstone A-Prime)).